Reading from the N-terminus, the 411-residue chain is Protein-lysine 6-oxidase (411 aa).

A signal peptide spans Met-1–Cys-21. Residues Ala-22–Gly-162 constitute a propeptide, removed by BMP1. The disordered stretch occupies residues Pro-60 to Pro-168. N-linked (GlcNAc...) asparagine glycosylation is found at Asn-91 and Asn-138. Residue Tyr-181 is modified to Sulfotyrosine. The lysyl-oxidase like stretch occupies residues Pro-207 to Tyr-411. Intrachain disulfides connect Cys-232–Cys-238, Cys-285–Cys-334, Cys-318–Cys-324, Cys-345–Cys-355, and Cys-392–Cys-406. Cu cation is bound by residues His-286, His-288, and His-290. Positions Lys-314 to Tyr-349 form a cross-link, lysine tyrosylquinone (Lys-Tyr). Position 349 is a 2',4',5'-topaquinone (Tyr-349).

The protein belongs to the lysyl oxidase family. Interacts with MFAP4. Interacts (via propeptide) with EFEMP2; this interaction is strong and facilitates formation of ternary complexes with ELN during elastic fiber assembly; this interaction limits interaction of EFEMP2 with FBLN5. Requires Cu cation as cofactor. Lysine tyrosylquinone residue is required as a cofactor. The lysine tyrosylquinone cross-link (LTQ) is generated by condensation of the epsilon-amino group of a lysine with a topaquinone produced by oxidation of tyrosine. In terms of processing, proteolytically cleaved by BMP1 which removes the propeptide. Also proteolytically cleaved by ADAMTS2 and ADAMTS14, but not by ADAMTS3, at an additional cleavage site downstream of the BMP1 cleavage site. The propeptide plays a role in directing the deposition of this enzyme to elastic fibers, via interaction with tropoelastin. Cleavage by BMP1 to remove the propeptide does not increase enzymatic activity but increases binding to collagen. Cleavage by ADAMTS2 produces a form with reduced collagen-binding activity. Post-translationally, sulfated at Tyr-181 and also at either Tyr-177 or Tyr-178 which enhances binding to collagen. In terms of tissue distribution, aorta and lung.

The protein localises to the secreted. It localises to the extracellular space. The catalysed reaction is L-lysyl-[protein] + O2 + H2O = (S)-2-amino-6-oxohexanoyl-[protein] + H2O2 + NH4(+). In terms of biological role, responsible for the post-translational oxidative deamination of peptidyl lysine residues in precursors to fibrous collagen and elastin. Regulator of Ras expression. May play a role in tumor suppression. Plays a role in the aortic wall architecture. The polypeptide is Protein-lysine 6-oxidase (Rattus norvegicus (Rat)).